The sequence spans 941 residues: Gamma-aminobutyric acid type B receptor subunit 2 (941 aa).

The first 41 residues, 1-41 (MASPRSSGQPGPPPPPPPPPARLLLLLLLPLLLPLAPGAWG), serve as a signal peptide directing secretion. The Extracellular segment spans residues 42–483 (WARGAPRPPP…LRKISLPLYS (442 aa)). Residue Asn90 is glycosylated (N-linked (GlcNAc...) asparagine). Cystine bridges form between Cys108–Cys135, Cys237–Cys266, and Cys265–Cys302. 4 N-linked (GlcNAc...) asparagine glycosylation sites follow: Asn298, Asn389, Asn404, and Asn453. A helical membrane pass occupies residues 484–504 (ILSALTILGMIMASAFLFFNI). The Cytoplasmic segment spans residues 505-522 (KNRNQKLIKMSSPYMNNL). A helical transmembrane segment spans residues 523–543 (IILGGMLSYASIFLFGLDGSF). The Extracellular portion of the chain corresponds to 544 to 551 (VSEKTFET). Residues 552–572 (LCTVRTWILTVGYTTAFGAMF) form a helical membrane-spanning segment. At 573 to 597 (AKTWRVHAIFKNVKMKKKIIKDQKL) the chain is on the cytoplasmic side. The helical transmembrane segment at 598-618 (LVIVGGMLLIDLCILICWQAV) threads the bilayer. Residues 619 to 654 (DPLRRTVEKYSMEPDPAGRDISIRPLLEHCENTHMT) are Extracellular-facing. A helical membrane pass occupies residues 655–675 (IWLGIVYAYKGLLMLFGCFLA). The Cytoplasmic segment spans residues 676–691 (WETRNVSIPALNDSKY). A helical membrane pass occupies residues 692 to 712 (IGMSVYNVGIMCIIGAAVSFL). Over 713-720 (TRDQPNVQ) the chain is Extracellular. A helical transmembrane segment spans residues 721–741 (FCIVALVIIFCSTITLCLVFV). Residues 742-941 (PKLITLRTNP…PSFRVMVSGL (200 aa)) lie on the Cytoplasmic side of the membrane. The tract at residues 763–790 (TQNQKKEDSKTSTSVTSVNQASTSRLEG) is disordered. The segment covering 773–787 (TSTSVTSVNQASTSR) has biased composition (polar residues). Residues Ser776 and Ser779 each carry the phosphoserine modification. Residues 781 to 819 (NQASTSRLEGLQSENHRLRMKITELDKDLEEVTMQLQDT) adopt a coiled-coil conformation. Thr819 is subject to Phosphothreonine. Ser884, Ser893, Ser913, Ser916, Ser920, and Ser924 each carry phosphoserine.

Belongs to the G-protein coupled receptor 3 family. GABA-B receptor subfamily. In terms of assembly, heterodimer of GABBR1 and GABBR2. Homodimers may form, but are inactive. Interacts (via C-terminus) with ATF4 (via leucine zipper domain). In terms of tissue distribution, highly expressed in brain, especially in cerebral cortex, thalamus, hippocampus, frontal, occipital and temporal lobe, occipital pole and cerebellum, followed by corpus callosum, caudate nucleus, spinal cord, amygdala and medulla. Weakly expressed in heart, testis and skeletal muscle.

It localises to the cell membrane. The protein localises to the postsynaptic cell membrane. Functionally, component of a heterodimeric G-protein coupled receptor for GABA, formed by GABBR1 and GABBR2. Within the heterodimeric GABA receptor, only GABBR1 seems to bind agonists, while GABBR2 mediates coupling to G proteins. Ligand binding causes a conformation change that triggers signaling via guanine nucleotide-binding proteins (G proteins) and modulates the activity of down-stream effectors, such as adenylate cyclase. Signaling inhibits adenylate cyclase, stimulates phospholipase A2, activates potassium channels, inactivates voltage-dependent calcium-channels and modulates inositol phospholipid hydrolysis. Plays a critical role in the fine-tuning of inhibitory synaptic transmission. Pre-synaptic GABA receptor inhibits neurotransmitter release by down-regulating high-voltage activated calcium channels, whereas postsynaptic GABA receptor decreases neuronal excitability by activating a prominent inwardly rectifying potassium (Kir) conductance that underlies the late inhibitory postsynaptic potentials. Not only implicated in synaptic inhibition but also in hippocampal long-term potentiation, slow wave sleep, muscle relaxation and antinociception. In Homo sapiens (Human), this protein is Gamma-aminobutyric acid type B receptor subunit 2 (GABBR2).